The following is a 198-amino-acid chain: Recombination protein RecR (198 aa).

A C4-type zinc finger spans residues 57 to 72; that stretch reads CSICGNITEEDPCEIC. A Toprim domain is found at 80-175; the sequence is SIILVVEEPK…TVTRLAHGLS (96 aa).

This sequence belongs to the RecR family.

Its function is as follows. May play a role in DNA repair. It seems to be involved in an RecBC-independent recombinational process of DNA repair. It may act with RecF and RecO. This Enterococcus faecalis (strain ATCC 700802 / V583) protein is Recombination protein RecR.